Here is a 279-residue protein sequence, read N- to C-terminus: MTDTIVLNDISIGGGAPLVVIAGPCVIEDYDTTLQAAEFLKTVTDRLGIPFIFKASYDKANRSSVHSFRGPGPDLGLDILRRVKERLHVPVLSDVHTESQIGPAAQVLDIIQTPAFLCRQTDFITAVAATGKIINIKKGQFLAPWDITQVVEKARTAGNENILITERGAMFGYNNLVVDFRAIPIMQQQTGKPVIFDATHSVQLPGGQGTCSGGQREFVPCLARAAVAAGADGIFLEVHRNPDKALCDGPNSLPLEQVEPLLTALVAIRQAATEQAGHA.

This sequence belongs to the KdsA family.

The protein localises to the cytoplasm. It catalyses the reaction D-arabinose 5-phosphate + phosphoenolpyruvate + H2O = 3-deoxy-alpha-D-manno-2-octulosonate-8-phosphate + phosphate. It participates in carbohydrate biosynthesis; 3-deoxy-D-manno-octulosonate biosynthesis; 3-deoxy-D-manno-octulosonate from D-ribulose 5-phosphate: step 2/3. Its pathway is bacterial outer membrane biogenesis; lipopolysaccharide biosynthesis. This chain is 2-dehydro-3-deoxyphosphooctonate aldolase, found in Desulfosudis oleivorans (strain DSM 6200 / JCM 39069 / Hxd3) (Desulfococcus oleovorans).